The sequence spans 22 residues: Zinc finger protein 326 (22 aa).

Residues Gln-1 to Pro-22 form a disordered region. The span at Thr-11 to Pro-22 shows a compositional bias: polar residues.

It belongs to the AKAP95 family.

Its subcellular location is the nucleus matrix. Probable transcriptional activator which may play a role in neuronal differentiation. Able to bind DNA and activate expression in vitro. This Rattus norvegicus (Rat) protein is Zinc finger protein 326 (Znf326).